The chain runs to 511 residues: Fusicocca-1,10(14)-diene-8beta,16-diol C-9 hydroxylase (511 aa).

The helical transmembrane segment at 7–29 threads the bilayer; that stretch reads TVAALAAVFVAGTLLSRLASWIR. N-linked (GlcNAc...) asparagine glycans are attached at residues Asn-64, Asn-163, and Asn-343. Position 450 (Cys-450) interacts with heme.

It belongs to the cytochrome P450 family. The cofactor is heme.

The protein localises to the membrane. Its pathway is mycotoxin biosynthesis. Its function is as follows. Cytochrome P450 monooxygenase; part of the 2 gene clusters that mediate the biosynthesis of fusicoccins, diterpene glucosides that display phytohormone-like activity and function as potent activators of plasma membrane H(+)-ATPases in plants by modifying 14-3-3 proteins and cause the plant disease constriction canker. The first step in the pathway is performed by the fusicoccadiene synthase PaFS that possesses both prenyl transferase and terpene cyclase activity, converting isopentenyl diphosphate and dimethylallyl diphosphate into geranylgeranyl diphosphate (GGDP) and successively converting GGDP into fusicocca-2,10(14)-diene, a precursor for fusicoccin H. The second step is the oxidation at the C-8 position by the cytochrome P450 monooxygenase PaP450-2 to yield fusicocca-2,10(14)-diene-8-beta-ol. The cytochrome P450 monooxygenase PaP450-1 then catalyzes the hydroxylation at the C-16 position to produce fusicocca-2,10(14)-diene-8-beta,16-diol. The dioxygenase fc-dox then catalyzes the 16-oxydation of fusicocca-2,10(14)-diene-8-beta,16-diol to yield an aldehyde (8-beta-hydroxyfusicocca-1,10(14)-dien-16-al). The short-chain dehydrogenase/reductase fc-sdr catalyzes the reduction of the aldehyde to yield fusicocca-1,10(14)-diene-8-beta,16-diol. The next step is the hydroxylation at C-9 performed by the cytochrome P450 monooxygenase PaP450-3 that leads to fusicoccin H aglycon which is glycosylated to fusicoccin H by the O-glycosyltransferase PaGT. Hydroxylation at C-12 by the cytochrome P450 monooxygenase PaP450-4 leads then to the production of fusicoccin Q and is followed by methylation by the O-methyltransferase PaMT to yield fusicoccin P. Fusicoccin P is further converted to fusicoccin J via prenylation by the O-glucose prenyltransferase PaPT. Cytochrome P450 monooxygenase PaP450-5 then performs hydroxylation at C-19 to yield dideacetyl-fusicoccin A which is acetylated to 3'-O-deacetyl-fusicoccin A by the O-acetyltransferase PaAT-2. Finally, a another acetylation by the O-acetyltransferase PaAT-1 yields fusicoccin A. The protein is Fusicocca-1,10(14)-diene-8beta,16-diol C-9 hydroxylase of Phomopsis amygdali (Fusicoccum amygdali).